A 1936-amino-acid chain; its full sequence is Trinucleotide repeat-containing gene 6C protein (1936 aa).

Basic and acidic residues predominate over residues 1–31 (MEEKKKKKQEEKKKKEGAQKKAADQKTKVPE). Disordered stretches follow at residues 1 to 160 (MEEK…PTYR), 181 to 256 (PSIT…NSNG), 366 to 412 (PQES…AMQT), 439 to 931 (NGSS…IRRK), 961 to 1063 (VIQS…VAFG), and 1115 to 1139 (ESTS…KTSG). A compositionally biased stretch (polar residues) spans 34-44 (KTCSSQPQPAG). Residues 45–57 (TSTSTSTSTISSS) show a composition bias toward low complexity. Residues 58–71 (NNGKRASASGQQPA) are compositionally biased toward polar residues. The segment covering 76 to 88 (LPREVPPRFRQQE) has biased composition (basic and acidic residues). Composition is skewed to polar residues over residues 100–111 (PTGTLTSVSPTQ) and 183–217 (ITGT…GSAQ). The segment at 211 to 1133 (MATGSAQGNF…GNAPKKGLQK (923 aa)) is sufficient for interaction with argonaute family proteins. A compositionally biased stretch (low complexity) spans 218–235 (GNFTGHTKKTNGNNGTNG). The segment covering 366–393 (PQESTEPQTSTSQNVSFSAQPQNLNTDG) has biased composition (polar residues). 3 stretches are compositionally biased toward low complexity: residues 394–408 (PNNT…NPIN), 439–453 (NGSS…SAEG), and 469–480 (GNSNSGFSQGNG). Positions 481–498 (DTVNSALSAKQNGSSSAV) are enriched in polar residues. Arg-523 carries the post-translational modification Omega-N-methylarginine. Positions 572-585 (GWESPSVTSQNPTV) are enriched in polar residues. A compositionally biased stretch (low complexity) spans 594–614 (SWAKAASSGTTASEGSSDGSG). The segment covering 625-636 (GTGEGRRRDKGI) has biased composition (basic and acidic residues). Residues 654–669 (LSNTGWGQTPVKQNTA) are compositionally biased toward polar residues. Over residues 674–684 (ESPRSERKNDN) the composition is skewed to basic and acidic residues. Position 675 is a phosphoserine (Ser-675). Positions 694-718 (TQASNSGGKNDGSIMNSTNTSSVSG) are enriched in polar residues. 2 stretches are compositionally biased toward low complexity: residues 720–730 (VNAPPAAVPAN) and 750–772 (SISS…SGAA). Composition is skewed to polar residues over residues 834 to 866 (NRSG…TNWG) and 873 to 888 (PQQN…NVSN). Phosphoserine is present on Ser-924. Residues 964–982 (SSTTTNTTTTTTTTTSNTT) are compositionally biased toward low complexity. At Thr-987 the chain carries Phosphothreonine. Residues 1021-1035 (ENSWGEPSSPSTLVD) show a composition bias toward polar residues. The UBA domain maps to 1140-1185 (KQDEAWIMSRLIKQLTDMGFPREPAEEALKSNNMNLDQAMSALLEK). Ser-1218 carries the post-translational modification Phosphoserine. 4 disordered regions span residues 1291-1312 (AAQA…NSSQ), 1419-1658 (VKQP…PSSS), 1689-1732 (STWS…PSST), and 1848-1869 (TSSW…GSSH). Residues 1388–1419 (MRQQEQQVARTITNLQQQIQQHQRQLAQALLV) adopt a coiled-coil conformation. A compositionally biased stretch (pro residues) spans 1421–1430 (QPPPPPPPPH). The interval 1467 to 1936 (NTFAPYPLAG…PGDLLSGESL (470 aa)) is silencing domain; interaction with CNOT1 and PAN3. Polar residues predominate over residues 1496–1515 (DPSQSQSRLPQWTHPNSMDN). The segment at 1578 to 1624 (KSDSDKISNGSSINWPPEFHPGVPWKGLQNIDPENDPDVTPGSVPTG) is required for interaction with PABPC1. The interval 1578–1936 (KSDSDKISNG…PGDLLSGESL (359 aa)) is sufficient for translational repression when tethered to a target mRNA. The tract at residues 1588 to 1606 (SSINWPPEFHPGVPWKGLQ) is PABPC1-interacting motif-2 (PAM2). Over residues 1623-1633 (TGPTINTTIQD) the composition is skewed to polar residues. The segment covering 1641 to 1658 (SGGSSPPSSQNATLPSSS) has biased composition (low complexity). Polar residues predominate over residues 1689–1703 (STWSSGPTSHTQASL). The RRM domain maps to 1811–1878 (AQKSLHMCVL…HGLVRSDAGH (68 aa)). Positions 1842 to 1936 (GQALPPTSSW…PGDLLSGESL (95 aa)) are interaction with the CCR4-NOT complex. Over residues 1848–1865 (TSSWQSSSASSQPRLSAA) the composition is skewed to low complexity.

This sequence belongs to the GW182 family. Interacts with one or more of the argonaute family proteins AGO1, AGO2, AGO3 and AGO4. Interacts with PABPC1 and EIF4G1. Interacts with CNOT1; the interaction is direct and mediates the association with the CCR4-NOT complex. Interacts with PAN3; the interaction mediates the association with the PAN complex.

Its function is as follows. Plays a role in RNA-mediated gene silencing by micro-RNAs (miRNAs). Required for miRNA-dependent translational repression of complementary mRNAs by argonaute family proteins. As scaffoldng protein associates with argonaute proteins bound to partially complementary mRNAs and simultaneously can recruit CCR4-NOT and PAN deadenylase complexes. The chain is Trinucleotide repeat-containing gene 6C protein (TNRC6C) from Homo sapiens (Human).